Here is a 1014-residue protein sequence, read N- to C-terminus: Pre-mRNA-processing ATP-dependent RNA helicase prp11 (1014 aa).

The segment covering 1 to 11 (MSRRTRSRSPP) has biased composition (basic residues). The interval 1 to 149 (MSRRTRSRSP…SRFDRTERVG (149 aa)) is disordered. Basic and acidic residues-rich tracts occupy residues 15 to 87 (YNRE…EYAR) and 106 to 121 (RHAE…KSDE). The short motif at 418 to 446 (TSWSQCGLSAQTISVINSLGYEKPTSIQA) is the Q motif element. One can recognise a Helicase ATP-binding domain in the interval 449–627 (IPAITSGRDV…RKVLKKPVEI (179 aa)). Position 462-469 (462-469 (AKTGSGKT)) interacts with ATP. A DEAD box motif is present at residues 575–578 (DEAD). The 165-residue stretch at 638-802 (EVEQIVEVRP…PVPKELQTLA (165 aa)) folds into the Helicase C-terminal domain. Residues 815–875 (KAAGGGFGGK…PEKSTGDPTL (61 aa)) form a disordered region. Composition is skewed to basic and acidic residues over residues 827 to 838 (SRLDETRNAERK) and 855 to 875 (AEAK…DPTL).

Belongs to the DEAD box helicase family. DDX46/PRP5 subfamily.

It localises to the nucleus. The enzyme catalyses ATP + H2O = ADP + phosphate + H(+). ATP-dependent RNA helicase involved in pre-spliceosome/complex A assembly and mRNA splicing. Bridges U1 and U2 snRNPs during pre-spliceosome assembly and enables stable U2 snRNP association with intron RNA. Through its helicase activity probably catalyzes an ATP-dependent conformational change of U2 snRNP. In Schizosaccharomyces pombe (strain 972 / ATCC 24843) (Fission yeast), this protein is Pre-mRNA-processing ATP-dependent RNA helicase prp11 (prp11).